We begin with the raw amino-acid sequence, 190 residues long: Vexin (190 aa).

A disordered region spans residues 88–156 (AEKKASRFSR…DEATLPLTAH (69 aa)). The span at 117–133 (TDKQNAPTVPASPSSYE) shows a compositional bias: polar residues. Positions 136-149 (GCREQRPENPKDEA) are enriched in basic and acidic residues.

This sequence belongs to the vexin family. Expressed in differentiating progenitors in the developing central nervous system (CNS).

The protein resides in the cell membrane. It localises to the nucleus. Required for neurogenesis in the neural plate and retina. Cooperates with cell cycle inhibitor cdknx/p27(xic1) to enhance neurogenesis and increase the levels of the neuronal determination factor neurog2/X-ngngr-1. The protein is Vexin of Xenopus laevis (African clawed frog).